A 282-amino-acid chain; its full sequence is Small ribosomal subunit protein uS2 (282 aa).

The tract at residues 245–266 is disordered; that stretch reads AEEAVEELPLPTGEAQDEASSK.

The protein belongs to the universal ribosomal protein uS2 family.

In Chlamydia trachomatis serovar D (strain ATCC VR-885 / DSM 19411 / UW-3/Cx), this protein is Small ribosomal subunit protein uS2 (rpsB).